The chain runs to 466 residues: 3-isopropylmalate dehydratase large subunit (466 aa).

The [4Fe-4S] cluster site is built by cysteine 347, cysteine 407, and cysteine 410.

The protein belongs to the aconitase/IPM isomerase family. LeuC type 1 subfamily. Heterodimer of LeuC and LeuD. Requires [4Fe-4S] cluster as cofactor.

The catalysed reaction is (2R,3S)-3-isopropylmalate = (2S)-2-isopropylmalate. It functions in the pathway amino-acid biosynthesis; L-leucine biosynthesis; L-leucine from 3-methyl-2-oxobutanoate: step 2/4. Functionally, catalyzes the isomerization between 2-isopropylmalate and 3-isopropylmalate, via the formation of 2-isopropylmaleate. This Escherichia fergusonii (strain ATCC 35469 / DSM 13698 / CCUG 18766 / IAM 14443 / JCM 21226 / LMG 7866 / NBRC 102419 / NCTC 12128 / CDC 0568-73) protein is 3-isopropylmalate dehydratase large subunit.